We begin with the raw amino-acid sequence, 1685 residues long: PHD and RING finger domain-containing protein 1 (1685 aa).

Residues 1-82 (MDDDNLDELV…GSEDSEDGIE (82 aa)) are disordered. A compositionally biased stretch (acidic residues) spans 41–81 (DSEDDTGSEQDDDTDGEETEGLSEEEDPEDRSGSEDSEDGI). The RING-type; degenerate zinc finger occupies 109-150 (CPICLNAFRDQAVGTPETCAHYFCLDCIIEWSRNANSCPVDR). A PHD-type zinc finger spans residues 188-238 (PTFCEVCGRSDREDRLLLCDGCDAGYHMECLDPPLQEVPVDEWFCPECAVP). Disordered regions lie at residues 333–390 (PLTP…KLKN), 449–483 (DSNGEQSADPPSPLSAKRRVLSRSALQSHQPVARP), 537–590 (SAKR…GLSC), 606–777 (TPVR…GSSF), and 809–860 (KVQR…LLPS). Residue T335 is modified to Phosphothreonine. Composition is skewed to basic residues over residues 339–364 (PAKRKRKAGRRKKVLGRKKTRSRSSV) and 372–387 (RAKKRQHRVRRTKGRK). S450 and S460 each carry phosphoserine. Polar residues-rich tracts occupy residues 606–625 (TPVRSDSSVTPRSGLSGNLS) and 637–662 (SPRLNGSNVRVGSASTKTMTHSNFPS). Positions 671–682 (QKTDPRRPDFSK) are enriched in basic and acidic residues. Polar residues-rich tracts occupy residues 694 to 709 (SNSTQDQAPASGQTVE) and 737 to 751 (SSRGPQETGSHTSGS). Phosphoserine is present on residues S817, S848, S849, S867, S870, S922, S948, S984, and S1002. A compositionally biased stretch (low complexity) spans 835–860 (PFDPTGSDSSPPSSSPESLGSGLLPS). 3 disordered regions span residues 892 to 1229 (GTEM…VSEV), 1290 to 1355 (QLDD…APSD), and 1369 to 1390 (TTLSTPGVLPMGKDSPLLSGRG). Acidic residues predominate over residues 922–934 (SDLEQEGLGEIEP). The span at 1001–1010 (SSRSRSTSSS) shows a compositional bias: low complexity. 2 stretches are compositionally biased toward basic residues: residues 1011–1031 (RSRKKTKKKKKVAREHQRTRS) and 1054–1064 (KRHRAKTKSRR). Residues 1065-1075 (SSSDRASSQDR) show a composition bias toward basic and acidic residues. Basic residues-rich tracts occupy residues 1089–1102 (GPWGHGRCWRKSRS) and 1117–1129 (SRRRKRRHSGSRS). Basic and acidic residues-rich tracts occupy residues 1130–1143 (RGRDGSPHSSLERD) and 1151–1165 (RSRERMDKKESMTRS). Phosphoserine occurs at positions 1135 and 1139. Basic residues predominate over residues 1181–1191 (RTRRPHSREKH). The segment covering 1192–1201 (PHSPEKKGAV) has biased composition (basic and acidic residues). S1205 carries the post-translational modification Phosphoserine. Positions 1292–1305 (DDMSSPPSPESTDS) are enriched in low complexity. Residues S1372 and S1383 each carry the phosphoserine modification. The residue at position 1416 (T1416) is a Phosphothreonine. Disordered regions lie at residues 1421-1448 (EAEASTPALDRDPRTPLQRPQRPQEGDW), 1466-1501 (LPPPIHVLQESGLPDADPSQPPGVPRAEGPPAVGTL), and 1569-1591 (LAVPTTNNSEERTATPKTAAEKT). The segment covering 1577 to 1591 (SEERTATPKTAAEKT) has biased composition (basic and acidic residues). Residues 1589 to 1615 (EKTKKEEYMKKLHMQERAVEEVKLAIK) adopt a coiled-coil conformation.

Interacts with POLR2A (via the C-terminal domain).

In Rattus norvegicus (Rat), this protein is PHD and RING finger domain-containing protein 1.